We begin with the raw amino-acid sequence, 319 residues long: ATP-dependent 6-phosphofructokinase (319 aa).

Gly-11 is an ATP binding site. 21–25 (RAVTR) provides a ligand contact to ADP. ATP is bound by residues 72–73 (RY) and 102–105 (GDGS). Asp-103 lines the Mg(2+) pocket. 125–127 (TID) is a substrate binding site. The active-site Proton acceptor is Asp-127. Arg-154 is an ADP binding site. Residues Arg-162 and 169 to 171 (MGR) contribute to the substrate site. Residues 185 to 187 (GAD) and 213 to 215 (KDH) each bind ADP. Substrate contacts are provided by residues Glu-222, Arg-243, and 249–252 (HMQR).

It belongs to the phosphofructokinase type A (PFKA) family. ATP-dependent PFK group I subfamily. Prokaryotic clade 'B1' sub-subfamily. As to quaternary structure, homotetramer. Mg(2+) is required as a cofactor.

It localises to the cytoplasm. It catalyses the reaction beta-D-fructose 6-phosphate + ATP = beta-D-fructose 1,6-bisphosphate + ADP + H(+). Its pathway is carbohydrate degradation; glycolysis; D-glyceraldehyde 3-phosphate and glycerone phosphate from D-glucose: step 3/4. Allosterically activated by ADP and other diphosphonucleosides, and allosterically inhibited by phosphoenolpyruvate. The binding affinities for these effectors are decreased however, and therefore the allosteric effect becomes apparent only at high effector concentrations. Its function is as follows. Catalyzes the phosphorylation of D-fructose 6-phosphate to fructose 1,6-bisphosphate by ATP, the first committing step of glycolysis. In Lactobacillus delbrueckii subsp. bulgaricus, this protein is ATP-dependent 6-phosphofructokinase.